A 296-amino-acid polypeptide reads, in one-letter code: Decaprenyl diphosphate synthase (296 aa).

The interval 1–24 (MARDARKRTSSNFPQLPPAPDDYP) is disordered. D76 is an active-site residue. D76 contributes to the Mg(2+) binding site. Residues 76–80 (DGNGR), W81, R89, H93, 121–124 (STEN), W125, R127, R168, R244, and 250–252 (RSS) contribute to the substrate site. The active-site Proton acceptor is the N124. A Mg(2+)-binding site is contributed by E263. Position 292–294 (292–294 (RFG)) interacts with substrate.

It belongs to the UPP synthase family. Homodimer. It depends on Mg(2+) as a cofactor. Mn(2+) is required as a cofactor.

The protein resides in the cell membrane. The catalysed reaction is (2Z,6E)-farnesyl diphosphate + 7 isopentenyl diphosphate = (2Z,6Z,10Z,14Z,18Z,22Z,26Z,30Z,34E)-decaprenyl diphosphate + 7 diphosphate. It carries out the reaction n isopentenyl diphosphate + (2E,6E)-farnesyl diphosphate = a di-trans,poly-cis-polyprenyl diphosphate + n diphosphate. Its activity is regulated as follows. Activated by dithiothreitol and inhibited by EDTA. Catalyzes the sequential condensation of isopentenyl diphosphate (IPP) in the cis configuration with (2Z,6E)-farnesyl diphosphate (Z-FPP or EZ-FPP) generating the 50 carbon product trans,polycis-decaprenyl diphosphate. When (2E,6E)-farnesyl diphosphate (E-FPP or EE-FPP) is used in vitro, both primary products decaprenyl diphosphate and (2E,6E,10E)-geranylgeranyl diphosphate (EEE-GGPP) are synthesized. M.tuberculosis does not synthesize (2E,6E,10Z)-geranylgeranyl diphosphate (EEZ-GGPP) and heptaprenyl diphosphate. Can also accept many different allylic substrates, including E-geranyl diphosphate (E-GPP), neryl diphosphate (NPP), and all-trans-geranyl-geranyl diphosphate. This is Decaprenyl diphosphate synthase (uppS) from Mycobacterium tuberculosis (strain ATCC 25618 / H37Rv).